The sequence spans 366 residues: Histidinol-phosphate aminotransferase 2 (366 aa).

At Lys226 the chain carries N6-(pyridoxal phosphate)lysine.

Belongs to the class-II pyridoxal-phosphate-dependent aminotransferase family. Histidinol-phosphate aminotransferase subfamily. Homodimer. It depends on pyridoxal 5'-phosphate as a cofactor.

It carries out the reaction L-histidinol phosphate + 2-oxoglutarate = 3-(imidazol-4-yl)-2-oxopropyl phosphate + L-glutamate. Its pathway is amino-acid biosynthesis; L-histidine biosynthesis; L-histidine from 5-phospho-alpha-D-ribose 1-diphosphate: step 7/9. This Haemophilus influenzae (strain ATCC 51907 / DSM 11121 / KW20 / Rd) protein is Histidinol-phosphate aminotransferase 2 (hisC2).